A 232-amino-acid polypeptide reads, in one-letter code: 5'-methylthioadenosine/S-adenosylhomocysteine nucleosidase (232 aa).

Catalysis depends on glutamate 12, which acts as the Proton acceptor. Substrate-binding positions include glycine 78, isoleucine 152, and 173-174 (ME). The active-site Proton donor is aspartate 197.

Belongs to the PNP/UDP phosphorylase family. MtnN subfamily. As to quaternary structure, homodimer.

It catalyses the reaction S-adenosyl-L-homocysteine + H2O = S-(5-deoxy-D-ribos-5-yl)-L-homocysteine + adenine. The enzyme catalyses S-methyl-5'-thioadenosine + H2O = 5-(methylsulfanyl)-D-ribose + adenine. The catalysed reaction is 5'-deoxyadenosine + H2O = 5-deoxy-D-ribose + adenine. It functions in the pathway amino-acid biosynthesis; L-methionine biosynthesis via salvage pathway; S-methyl-5-thio-alpha-D-ribose 1-phosphate from S-methyl-5'-thioadenosine (hydrolase route): step 1/2. Catalyzes the irreversible cleavage of the glycosidic bond in both 5'-methylthioadenosine (MTA) and S-adenosylhomocysteine (SAH/AdoHcy) to adenine and the corresponding thioribose, 5'-methylthioribose and S-ribosylhomocysteine, respectively. Also cleaves 5'-deoxyadenosine, a toxic by-product of radical S-adenosylmethionine (SAM) enzymes, into 5-deoxyribose and adenine. Thus, is required for in vivo function of the radical SAM enzymes biotin synthase and lipoic acid synthase, that are inhibited by 5'-deoxyadenosine accumulation. The polypeptide is 5'-methylthioadenosine/S-adenosylhomocysteine nucleosidase (Salmonella dublin (strain CT_02021853)).